Reading from the N-terminus, the 225-residue chain is NAD(P)H-quinone oxidoreductase subunit K, chloroplastic (225 aa).

4 residues coordinate [4Fe-4S] cluster: Cys43, Cys44, Cys108, and Cys139.

The protein belongs to the complex I 20 kDa subunit family. As to quaternary structure, NDH is composed of at least 16 different subunits, 5 of which are encoded in the nucleus. Requires [4Fe-4S] cluster as cofactor.

Its subcellular location is the plastid. The protein localises to the chloroplast thylakoid membrane. It catalyses the reaction a plastoquinone + NADH + (n+1) H(+)(in) = a plastoquinol + NAD(+) + n H(+)(out). The catalysed reaction is a plastoquinone + NADPH + (n+1) H(+)(in) = a plastoquinol + NADP(+) + n H(+)(out). Its function is as follows. NDH shuttles electrons from NAD(P)H:plastoquinone, via FMN and iron-sulfur (Fe-S) centers, to quinones in the photosynthetic chain and possibly in a chloroplast respiratory chain. The immediate electron acceptor for the enzyme in this species is believed to be plastoquinone. Couples the redox reaction to proton translocation, and thus conserves the redox energy in a proton gradient. This chain is NAD(P)H-quinone oxidoreductase subunit K, chloroplastic, found in Nymphaea alba (White water-lily).